The following is a 473-amino-acid chain: Ribosomal protein uS12 methylthiotransferase RimO (473 aa).

The 112-residue stretch at 30 to 141 (ASVAVLHLGC…IVQIIERVER (112 aa)) folds into the MTTase N-terminal domain. 6 residues coordinate [4Fe-4S] cluster: Cys-39, Cys-75, Cys-104, Cys-179, Cys-183, and Cys-186. A Radical SAM core domain is found at 165–394 (TTHAPVAYLR…MQVQQGITFR (230 aa)). A TRAM domain is found at 397–463 (REQVGRVVPV…PYDLFGQVVA (67 aa)).

The protein belongs to the methylthiotransferase family. RimO subfamily. [4Fe-4S] cluster is required as a cofactor.

Its subcellular location is the cytoplasm. It catalyses the reaction L-aspartate(89)-[ribosomal protein uS12]-hydrogen + (sulfur carrier)-SH + AH2 + 2 S-adenosyl-L-methionine = 3-methylsulfanyl-L-aspartate(89)-[ribosomal protein uS12]-hydrogen + (sulfur carrier)-H + 5'-deoxyadenosine + L-methionine + A + S-adenosyl-L-homocysteine + 2 H(+). Catalyzes the methylthiolation of an aspartic acid residue of ribosomal protein uS12. This is Ribosomal protein uS12 methylthiotransferase RimO from Synechococcus sp. (strain JA-2-3B'a(2-13)) (Cyanobacteria bacterium Yellowstone B-Prime).